A 150-amino-acid polypeptide reads, in one-letter code: Cytochrome c-type biogenesis protein CcmE (150 aa).

Over 1–7 (MTRKQKR) the chain is Cytoplasmic. Residues 8 to 28 (LAIIGGGVAFLTAAVLLVMFA) traverse the membrane as a helical; Signal-anchor for type II membrane protein segment. The Periplasmic portion of the chain corresponds to 29–150 (FSQAVAYFYV…VTLGGEENIR (122 aa)). His-123 and Tyr-127 together coordinate heme.

This sequence belongs to the CcmE/CycJ family.

It is found in the cell inner membrane. In terms of biological role, heme chaperone required for the biogenesis of c-type cytochromes. Transiently binds heme delivered by CcmC and transfers the heme to apo-cytochromes in a process facilitated by CcmF and CcmH. The polypeptide is Cytochrome c-type biogenesis protein CcmE (Rhizobium meliloti (strain 1021) (Ensifer meliloti)).